The chain runs to 680 residues: UvrABC system protein C (680 aa).

A GIY-YIG domain is found at 66–144 (NSPGVYRMFN…IKRLRPRFNV (79 aa)). Residues 254–289 (QKVKSHMAEAMNQAAEDLDFERAAIYRDRLAALSHV) enclose the UVR domain.

This sequence belongs to the UvrC family. Interacts with UvrB in an incision complex.

Its subcellular location is the cytoplasm. The UvrABC repair system catalyzes the recognition and processing of DNA lesions. UvrC both incises the 5' and 3' sides of the lesion. The N-terminal half is responsible for the 3' incision and the C-terminal half is responsible for the 5' incision. This chain is UvrABC system protein C, found in Rhizobium johnstonii (strain DSM 114642 / LMG 32736 / 3841) (Rhizobium leguminosarum bv. viciae).